The primary structure comprises 241 residues: Type III pantothenate kinase (241 aa).

An ATP-binding site is contributed by 6–13; sequence DVGNTRIK. Position 94–97 (94–97) interacts with substrate; sequence GIDR. The Proton acceptor role is filled by D96. D117 is a binding site for K(+). Residue T120 coordinates ATP. T172 lines the substrate pocket.

Belongs to the type III pantothenate kinase family. Homodimer. NH4(+) serves as cofactor. K(+) is required as a cofactor.

It is found in the cytoplasm. It carries out the reaction (R)-pantothenate + ATP = (R)-4'-phosphopantothenate + ADP + H(+). It participates in cofactor biosynthesis; coenzyme A biosynthesis; CoA from (R)-pantothenate: step 1/5. Functionally, catalyzes the phosphorylation of pantothenate (Pan), the first step in CoA biosynthesis. This chain is Type III pantothenate kinase, found in Flavobacterium psychrophilum (strain ATCC 49511 / DSM 21280 / CIP 103535 / JIP02/86).